Reading from the N-terminus, the 1050-residue chain is MAFKIKTFLSIKSHKIFYTDFYFFLKKKLIILIKNIFPEYFNFNNKYKNWNLICLPDFLYFKVNNTHFLDNVQYINSLIKIFLPLKFQNLKTNQIFFKNLLIFELPKYNSHNYCYLNGLKKIFISKYFTSNGIFFHKYLKRKYDIYYAKILLTNSNFFNIVLDLKLKQIYLSIKNLKFNFILFLYYLGINNKDILKYSRYKKSKILKLLIFTALQTNLINNKKFILKNLNYLKSIFKVTNLNKNYKHFIINKNKLNYNYGNFNKNNFLTIDFIFILDLLLDLQSKKLCFKNIDHLDNKHINTIGNYFQHNFKFYLKKFISIIPNLIKLKKFSLLKVYNFKELLILNPLIQYLEQINSFSELTHKYKLNNYNSSLKGILNLREICLNQIGKLCLIDTTEGINCGLIVNFAKHIRIYKKGIIQIYVSPVFKNKTKEFINFKTSLDQELYLIQFNNINLRKNKLFNENIKVVYNKNNFRIKFISNKKSFLLKFADLFSFTENLIPFIKYNDPARCLMGAKMQSQSVPLLNKKKSFVVTGYEKEIITKSDITIKALQEGIVLNASSLKIHIKDLFNREIVYYLSKYKKSNQNTLIHQKPLVWNGERVFTNQLLTQHQDIIDSEFAIGNNLLIYYGNFCGYDFEDAVIGSKRVLYQQLFSSLHMDIYEFNFGYNNENDIEFSTLEIPKQSYYIKKSLDSLGIVKEGEKILTGNILLTKIKVTKPNYTYKSIFKLIYSIFGKTIRNIKDNSLYIQTGKNGRVSKIELFLINTNSHYKTYNNSYLKCRIFICKQRFLTVGDKLCGRYGNKGILSYIAENADLPFLQNSFYPDIIVGALGIPSRMNLGQLFEALVGKIGFSYNIRILPSFTSSSNAYFNYLKILIYNFLMFNNLKKGFNWLYNFNLPGKFLIRDGRTGIKLKSSVLCGVSRYSKLIHMIKDKLHFRTTGPYTEILQQPLKGKKNLGGQRFGEMEIWALEAFGASYNLKEILNYKSDDCFARNNLKDYLLFRNSELQNSTITESFRVILKEFNGLILNLELFLITDDLEENYLNLTINY.

Belongs to the RNA polymerase beta chain family. As to quaternary structure, in plastids the minimal PEP RNA polymerase catalytic core is composed of four subunits: alpha, beta, beta', and beta''. When a (nuclear-encoded) sigma factor is associated with the core the holoenzyme is formed, which can initiate transcription (Potential).

The protein localises to the plastid. The protein resides in the apicoplast. It catalyses the reaction RNA(n) + a ribonucleoside 5'-triphosphate = RNA(n+1) + diphosphate. Its function is as follows. DNA-dependent RNA polymerase catalyzes the transcription of DNA into RNA using the four ribonucleoside triphosphates as substrates. This is DNA-directed RNA polymerase subunit beta (rpoB) from Neospora caninum (Coccidian parasite).